The following is a 379-amino-acid chain: Cytochrome b (379 aa).

Transmembrane regions (helical) follow at residues 33–53, 77–98, 113–133, and 178–198; these read FGSLLGMCLVIQILTGLFLAM, WLIRYLHANGASMFFICLFIHV, WNIGIILLLTTMATAFVGYVL, and FFAFHFILPFIIAAFALVHLL. Heme b-binding residues include His-83 and His-97. 2 residues coordinate heme b: His-182 and His-196. A ubiquinone is bound at residue His-201. A run of 4 helical transmembrane segments spans residues 226–246, 288–308, 320–340, and 347–367; these read TKDLLGIFLLLLVLMILALFF, LGGVLALVLSILILAAFPLLN, VTQVIYWIFIANLLVLTWIGG, and FTTIGQIASVTYFATIIILIP.

It belongs to the cytochrome b family. As to quaternary structure, the cytochrome bc1 complex contains 11 subunits: 3 respiratory subunits (MT-CYB, CYC1 and UQCRFS1), 2 core proteins (UQCRC1 and UQCRC2) and 6 low-molecular weight proteins (UQCRH/QCR6, UQCRB/QCR7, UQCRQ/QCR8, UQCR10/QCR9, UQCR11/QCR10 and a cleavage product of UQCRFS1). This cytochrome bc1 complex then forms a dimer. The cofactor is heme b.

Its subcellular location is the mitochondrion inner membrane. Component of the ubiquinol-cytochrome c reductase complex (complex III or cytochrome b-c1 complex) that is part of the mitochondrial respiratory chain. The b-c1 complex mediates electron transfer from ubiquinol to cytochrome c. Contributes to the generation of a proton gradient across the mitochondrial membrane that is then used for ATP synthesis. This Akodon montensis (Montane grass mouse) protein is Cytochrome b (MT-CYB).